Here is a 326-residue protein sequence, read N- to C-terminus: Meso-diaminopimelate D-dehydrogenase (326 aa).

NADP(+) is bound by residues 11-14 (YGNL), 35-37 (TRR), 69-72 (CGGS), 92-94 (SFD), and 121-125 (VGWDP). Substrate contacts are provided by residues Asp94, Asp124, Trp148, 154–155 (QG), Thr173, Arg199, His249, and Asn276.

Belongs to the diaminopimelate dehydrogenase family. As to quaternary structure, homodimer.

It catalyses the reaction meso-2,6-diaminopimelate + NADP(+) + H2O = (S)-2-amino-6-oxoheptanedioate + NH4(+) + NADPH + H(+). Its pathway is amino-acid biosynthesis; L-lysine biosynthesis via DAP pathway; DL-2,6-diaminopimelate from (S)-tetrahydrodipicolinate: step 1/1. With respect to regulation, the enzyme is completely inhibited by p-chloromercuribenzoate and HgCl(2) in vitro. Thioglycollate, L-cysteine and Cu(2+) also strongly inhibit the enzyme. Its function is as follows. Catalyzes the reversible NADPH-dependent reductive amination of L-2-amino-6-oxopimelate, the acyclic form of L-tetrahydrodipicolinate, to generate the meso compound, D,L-2,6-diaminopimelate. Probably plays a role in lysine biosynthesis. Is highly specific for meso-2,6-diaminopimelate as the electron donor, since the following amino acids are inert for the oxidative deamination reaction: DL-2-aminopimelate, D-glutamate, L-glutamate, D-aspartate, L-aspartate, D-alanine, L-alanine, D-valine, L-valine, D-lysine, L-lysine, D-phenylalanine, L-phenylalanine, D-leucine, L-leucine, D-threonine, L-threonine, D-serine, L-serine, D-tryptophan, L-tryptophan, D-cysteine, L-cysteine, D-histidine, L-histidine, D-methionine, D-arginine, D-proline, D-asparagine, D-glutamine, D-isoleucine and D-ornithine. Moreover, exclusively uses NADP as the electron acceptor for the oxidative deamination of meso-DAP; NAD is inert. The sequence is that of Meso-diaminopimelate D-dehydrogenase (ddh) from Ureibacillus thermosphaericus.